We begin with the raw amino-acid sequence, 151 residues long: Major latex allergen Hev b 5 (151 aa).

The tract at residues 1–151 (MASVEVESAA…TEVPVEKTEE (151 aa)) is disordered. An N-acetylalanine modification is found at Ala-2. Positions 17-31 (ETPEVTKAEETKTEE) are enriched in basic and acidic residues. Low complexity-rich tracts occupy residues 36–45 (PASEQETADA) and 53–64 (TAAPAEPEAPAP). 3 stretches are compositionally biased toward basic and acidic residues: residues 65–80 (ETEK…KTEE), 103–113 (EEPKHETKETE), and 122–133 (EGEKPAEEEKPI). Low complexity predominate over residues 134–144 (TEAAETATTEV).

The protein to kiwi fruit protein PKIWI501. In terms of processing, the N-terminus is blocked.

This chain is Major latex allergen Hev b 5, found in Hevea brasiliensis (Para rubber tree).